The chain runs to 166 residues: RING-H2 finger protein ATL79 (166 aa).

The first 16 residues, 1 to 16, serve as a signal peptide directing secretion; it reads MRLLVAEAASPLSSAA. Residues 41-61 form a helical membrane-spanning segment; that stretch reads SVLLILVISALICALSLYAAI. A disordered region spans residues 71-90; sequence TEDDHKPDPEAAASSTPTTP. Positions 81-90 are enriched in low complexity; the sequence is AAASSTPTTP. An RING-type; atypical zinc finger spans residues 107–149; the sequence is CAICLSEFEQGESIQVLEKCQHGFHVKCIHKWLSTRSSCPTCR.

Belongs to the RING-type zinc finger family. ATL subfamily.

The protein localises to the membrane. The catalysed reaction is S-ubiquitinyl-[E2 ubiquitin-conjugating enzyme]-L-cysteine + [acceptor protein]-L-lysine = [E2 ubiquitin-conjugating enzyme]-L-cysteine + N(6)-ubiquitinyl-[acceptor protein]-L-lysine.. It functions in the pathway protein modification; protein ubiquitination. The polypeptide is RING-H2 finger protein ATL79 (ATL79) (Arabidopsis thaliana (Mouse-ear cress)).